A 116-amino-acid chain; its full sequence is Somatostatin (116 aa).

The signal sequence occupies residues 1-24 (MLSCRLQCALAALSIVLALGGVTC). Positions 25 to 88 (APSDPRLRQF…QDEMRLELQR (64 aa)) are excised as a propeptide. An Alanine amide modification is found at Ala43. Positions 62–99 (QTENDALEPEDLSQAAEQDEMRLELQRSANSNPAMAPR) are disordered. A disulfide bridge links Cys105 with Cys116.

The protein belongs to the somatostatin family. Post-translationally, C-terminal amidation of the neuronostatin peptide is required for its biological activity, including for the regulation of mean arterial pressure.

It is found in the secreted. Functionally, inhibits the secretion of pituitary hormones, including that of growth hormone/somatotropin (GH1), PRL, ACTH, luteinizing hormone (LH) and TSH. Also impairs ghrelin- and GnRH-stimulated secretion of GH1 and LH; the inhibition of ghrelin-stimulated secretion of GH1 can be further increased by neuronostatin. Its function is as follows. May enhance low-glucose-induced glucagon release by pancreatic alpha cells. This effect may be mediated by binding to GPR107 and PKA activation. May regulate cardiac contractile function. May compromise cardiomyocyte viability. In the central nervous system, may impair memory retention and may affect hippocampal excitability. May also have anxiolytic and anorexigenic effects. May play a role in arterial pressure regulation. May inhibit basal, but not ghrelin- or GnRH-stimulated secretion of GH1 or LH, but does not affect the release of other pituitary hormones, including PRL, ACTH, FSH or TSH. Potentiates inhibitory action of somatostatin on ghrelin-stimulated secretion of GH1, but not that on GnRH-stimulated secretion of LH. The protein is Somatostatin (SST) of Canis lupus familiaris (Dog).